Here is a 488-residue protein sequence, read N- to C-terminus: Galactose-1-phosphate uridylyltransferase (488 aa).

It belongs to the galactose-1-phosphate uridylyltransferase type 2 family.

Its subcellular location is the cytoplasm. The enzyme catalyses alpha-D-galactose 1-phosphate + UDP-alpha-D-glucose = alpha-D-glucose 1-phosphate + UDP-alpha-D-galactose. Its pathway is carbohydrate metabolism; galactose metabolism. The polypeptide is Galactose-1-phosphate uridylyltransferase (galT) (Lactobacillus helveticus (Lactobacillus suntoryeus)).